The sequence spans 250 residues: MLMRQKGIIIKAVDYGESDKIITILNEHGAKVPLMARRAKKVKTGLQAQTQLFVYGLFIYNQWRGMGTLNSVDVISQHYKLQMDLYVSSYASLAAETIERSMDEGDIAPYNYQLLQFVLEKIESGTSAQLMSVVVMLKCMKRFGFTASFNRCAVSGNDTQADLIGYSFKFDGAISRQEASKDVHAVILSNKTLYLLDVLQKLPIDKMNSLNIHQEIIDEMSDIILMLYREYAGMFFKSQKLINQLKRLEQ.

Belongs to the RecO family.

Functionally, involved in DNA repair and RecF pathway recombination. The polypeptide is DNA repair protein RecO (Staphylococcus aureus (strain Mu3 / ATCC 700698)).